The following is a 133-amino-acid chain: uncharacterized protein (133 aa).

Residues 3–106 enclose the HIT domain; that stretch reads IFTKIINREL…PTRSLSDFGF (104 aa). The Histidine triad motif signature appears at 90 to 94; the sequence is HLHIH.

This is an uncharacterized protein from Mycobacterium tuberculosis (strain ATCC 25618 / H37Rv).